We begin with the raw amino-acid sequence, 847 residues long: Protein SEY1 (847 aa).

The Cytoplasmic portion of the chain corresponds to 1 to 720 (MSSGEPLSET…KRSIVQHVTQ (720 aa)). One can recognise a GB1/RHD3-type G domain in the interval 55–290 (GHNYHIVAVF…VENDIFKPEY (236 aa)). 65–72 (GSQSTGKS) contacts GTP. A helical transmembrane segment spans residues 721–741 (IPYYIYIIILLLGWNEFMAVV). Residues 742–744 (RNP) lie on the Lumenal side of the membrane. A helical membrane pass occupies residues 745–765 (FTFSLAIILGASLYILYTMNL). Residues 766–847 (LKPALTVTQR…VTSLNVVEEE (82 aa)) are Cytoplasmic-facing.

Belongs to the TRAFAC class dynamin-like GTPase superfamily. GB1/RHD3 GTPase family. RHD3 subfamily.

It localises to the endoplasmic reticulum membrane. In terms of biological role, cooperates with the reticulon proteins and tubule-shaping DP1 family proteins to generate and maintain the structure of the tubular endoplasmic reticulum network. Has GTPase activity, which is required for its function in ER organization. This chain is Protein SEY1, found in Lodderomyces elongisporus (strain ATCC 11503 / CBS 2605 / JCM 1781 / NBRC 1676 / NRRL YB-4239) (Yeast).